A 127-amino-acid polypeptide reads, in one-letter code: Putative truncated L-serine dehydratase YIL168W (127 aa).

K39 is subject to N6-(pyridoxal phosphate)lysine.

Belongs to the serine/threonine dehydratase family. The cofactor is pyridoxal 5'-phosphate.

Its subcellular location is the cytoplasm. The catalysed reaction is L-serine = pyruvate + NH4(+). The protein operates within carbohydrate biosynthesis; gluconeogenesis. This chain is Putative truncated L-serine dehydratase YIL168W, found in Saccharomyces cerevisiae (strain ATCC 204508 / S288c) (Baker's yeast).